The following is an 89-amino-acid chain: Small ribosomal subunit protein uS17 (89 aa).

It belongs to the universal ribosomal protein uS17 family. Part of the 30S ribosomal subunit.

In terms of biological role, one of the primary rRNA binding proteins, it binds specifically to the 5'-end of 16S ribosomal RNA. The polypeptide is Small ribosomal subunit protein uS17 (Albidiferax ferrireducens (strain ATCC BAA-621 / DSM 15236 / T118) (Rhodoferax ferrireducens)).